The primary structure comprises 372 residues: E3 ubiquitin-protein ligase RNF34 (372 aa).

The FYVE-type zinc-finger motif lies at 56-107 (EGPNIVCKACGLSFSVFRKKHVCCDCKKDFCSVCSVLQENLRRCSTCHLLQE). The region spanning 115–134 (LMRLKVKDLRQYLILRNIPT) is the SAP 1 domain. At S169 the chain carries Phosphoserine. Residues 194-252 (QGELMDGDQTSRSGVPAQVQSEITSANTEDDDDDDDEDDDDEEENAEDQNPGLSKERVR) are disordered. Positions 201-220 (DQTSRSGVPAQVQSEITSAN) are enriched in polar residues. Residues 221-240 (TEDDDDDDDEDDDDEEENAE) are compositionally biased toward acidic residues. 2 positions are modified to phosphoserine: S254 and S256. The SAP 2 domain maps to 264–278 (VEGMSVRQLKEILAR). Residues 325 to 360 (CRICMDAVIDCVLLECGHMVTCTKCGKRMSECPICR) form an RING-type zinc finger.

In terms of assembly, interacts with CASP8 and CASP10. Interacts with p53/TP53; involved in p53/TP53 ubiquitination. Interacts (via RING-type zinc finger) with MDM2; the interaction stabilizes MDM2. Interacts (via RING-type zinc finger) with PPARGC1A. Interacts with NOD1. Post-translationally, autoubiquitinated (in vitro). In terms of processing, proteolytically cleaved by caspases upon induction of apoptosis by TNF.

It is found in the cell membrane. The protein resides in the endomembrane system. The protein localises to the nucleus. Its subcellular location is the nucleus speckle. It localises to the cytoplasm. It is found in the cytosol. It catalyses the reaction S-ubiquitinyl-[E2 ubiquitin-conjugating enzyme]-L-cysteine + [acceptor protein]-L-lysine = [E2 ubiquitin-conjugating enzyme]-L-cysteine + N(6)-ubiquitinyl-[acceptor protein]-L-lysine.. It participates in protein modification; protein ubiquitination. E3 ubiquitin-protein ligase that regulates several biological processes through the ubiquitin-mediated proteasomal degradation of various target proteins. Ubiquitinates the caspases CASP8 and CASP10, promoting their proteasomal degradation, to negatively regulate cell death downstream of death domain receptors in the extrinsic pathway of apoptosis. May mediate 'Lys-48'-linked polyubiquitination of RIPK1 and its subsequent proteasomal degradation thereby indirectly regulating the tumor necrosis factor-mediated signaling pathway. Negatively regulates p53/TP53 through its direct ubiquitination and targeting to proteasomal degradation. Indirectly, may also negatively regulate p53/TP53 through ubiquitination and degradation of SFN. Mediates PPARGC1A proteasomal degradation probably through ubiquitination thereby indirectly regulating the metabolism of brown fat cells. Possibly involved in innate immunity, through 'Lys-48'-linked polyubiquitination of NOD1 and its subsequent proteasomal degradation. In Pongo abelii (Sumatran orangutan), this protein is E3 ubiquitin-protein ligase RNF34 (RNF34).